Consider the following 138-residue polypeptide: Large ribosomal subunit protein bL19 (138 aa).

The protein belongs to the bacterial ribosomal protein bL19 family.

In terms of biological role, this protein is located at the 30S-50S ribosomal subunit interface and may play a role in the structure and function of the aminoacyl-tRNA binding site. The chain is Large ribosomal subunit protein bL19 from Rickettsia rickettsii (strain Iowa).